Consider the following 163-residue polypeptide: Endoribonuclease YbeY (163 aa).

Zn(2+)-binding residues include H119, H123, and H129.

It belongs to the endoribonuclease YbeY family. The cofactor is Zn(2+).

Its subcellular location is the cytoplasm. Functionally, single strand-specific metallo-endoribonuclease involved in late-stage 70S ribosome quality control and in maturation of the 3' terminus of the 16S rRNA. This chain is Endoribonuclease YbeY, found in Actinobacillus pleuropneumoniae serotype 5b (strain L20).